A 608-amino-acid chain; its full sequence is ESX-3 secretion system protein EccA3 (608 aa).

Residues 284–303 (EARSDPWDPETEPSEAEFVD) form a disordered region. Residues 290–301 (WDPETEPSEAEF) are compositionally biased toward acidic residues. 365-372 (GPPGTGKT) serves as a coordination point for ATP.

Belongs to the CbxX/CfxQ family. As to quaternary structure, part of the ESX-3 / type VII secretion system (T7SS), which is composed of cytosolic and membrane components.

It is found in the cytoplasm. Its function is as follows. Part of the ESX-3 specialized secretion system, which is required for siderophore-mediated iron acquisition and for the secretion of EsxH and EsxG. EccA3 exhibits ATPase activity and may provide energy for the export of ESX-3 substrates. The protein is ESX-3 secretion system protein EccA3 of Mycolicibacterium smegmatis (strain ATCC 700084 / mc(2)155) (Mycobacterium smegmatis).